Here is a 580-residue protein sequence, read N- to C-terminus: DNA ligase 1 (580 aa).

E245 lines the ATP pocket. Catalysis depends on K247, which acts as the N6-AMP-lysine intermediate. ATP contacts are provided by R252, R267, E297, F343, R420, and K426.

Belongs to the ATP-dependent DNA ligase family. Mg(2+) is required as a cofactor.

It catalyses the reaction ATP + (deoxyribonucleotide)n-3'-hydroxyl + 5'-phospho-(deoxyribonucleotide)m = (deoxyribonucleotide)n+m + AMP + diphosphate.. In terms of biological role, DNA ligase that seals nicks in double-stranded DNA during DNA replication, DNA recombination and DNA repair. In Methanosarcina acetivorans (strain ATCC 35395 / DSM 2834 / JCM 12185 / C2A), this protein is DNA ligase 1.